The primary structure comprises 295 residues: Sulfotransferase 1A1 (295 aa).

3'-phosphoadenylyl sulfate is bound at residue 48-53 (KSGTTW). 106 to 108 (KTH) is a binding site for substrate. The active-site Proton acceptor is His108. 3'-phosphoadenylyl sulfate is bound by residues Arg130, Ser138, Tyr193, 227-232 (TSFKEM), and 255-259 (FMRKG). Ser138 carries the post-translational modification Phosphoserine.

The protein belongs to the sulfotransferase 1 family. Homodimer. As to expression, distal lung parenchyma.

It localises to the cytoplasm. The enzyme catalyses a phenol + 3'-phosphoadenylyl sulfate = an aryl sulfate + adenosine 3',5'-bisphosphate + H(+). It carries out the reaction 17beta-estradiol + 3'-phosphoadenylyl sulfate = 17beta-estradiol 3-sulfate + adenosine 3',5'-bisphosphate + H(+). The catalysed reaction is 4-ethylphenol + 3'-phosphoadenylyl sulfate = 4-ethylphenyl sulfate + adenosine 3',5'-bisphosphate + H(+). It catalyses the reaction 4-nitrophenol + 3'-phosphoadenylyl sulfate = 4-nitrophenyl sulfate + adenosine 3',5'-bisphosphate. The enzyme catalyses dopamine + 3'-phosphoadenylyl sulfate = dopamine 3-O-sulfate + adenosine 3',5'-bisphosphate + H(+). It carries out the reaction dopamine + 3'-phosphoadenylyl sulfate = dopamine 4-O-sulfate + adenosine 3',5'-bisphosphate + H(+). The catalysed reaction is 3,3',5-triiodo-L-thyronine + 3'-phosphoadenylyl sulfate = 3,3',5-triiodo-L-thyronine sulfate + adenosine 3',5'-bisphosphate + H(+). It catalyses the reaction 3,3',5'-triiodo-L-thyronine + 3'-phosphoadenylyl sulfate = 3,3',5'-triiodo-L-thyronine sulfate + adenosine 3',5'-bisphosphate + H(+). The enzyme catalyses 3,3'-diiodo-L-thyronine + 3'-phosphoadenylyl sulfate = 3,3'-diiodo-L-thyronine sulfate + adenosine 3',5'-bisphosphate + H(+). It carries out the reaction L-thyroxine + 3'-phosphoadenylyl sulfate = L-thyroxine sulfate + adenosine 3',5'-bisphosphate + H(+). Sulfotransferase that utilizes 3'-phospho-5'-adenylyl sulfate (PAPS) as sulfonate donor to catalyze the sulfate conjugation of a wide variety of acceptor molecules bearing a hydroxyl or an amine group. Sulfonation increases the water solubility of most compounds, and therefore their renal excretion, but it can also result in bioactivation to form active metabolites. Displays broad substrate specificity for small phenolic compounds. Plays an important role in the sulfonation of endogenous molecules such as steroid hormones. Mediates also the metabolic activation of carcinogenic N-hydroxyarylamines leading to highly reactive intermediates capable of forming DNA adducts, potentially resulting in mutagenesis. May play a role in gut microbiota-host metabolic interaction. O-sulfonates 4-ethylphenol (4-EP), a dietary tyrosine-derived metabolite produced by gut bacteria. The product 4-EPS crosses the blood-brain barrier and may negatively regulate oligodendrocyte maturation and myelination, affecting the functional connectivity of different brain regions associated with the limbic system. Catalyzes the sulfate conjugation of dopamine. Catalyzes the sulfation of T4 (L-thyroxine/3,5,3',5'-tetraiodothyronine), T3 (3,5,3'-triiodothyronine), rT3 (3,3',5'-triiodothyronine) and 3,3'-T2 (3,3'-diiodothyronine), with a substrate preference of 3,3'-T2 &gt; rT3 &gt; T3 &gt; T4. This Bos taurus (Bovine) protein is Sulfotransferase 1A1 (SULT1A1).